The primary structure comprises 475 residues: 1-aminocyclopropane-1-carboxylate synthase CMA101 (475 aa).

K272 is subject to N6-(pyridoxal phosphate)lysine.

The protein belongs to the class-I pyridoxal-phosphate-dependent aminotransferase family. In terms of assembly, homodimer. It depends on pyridoxal 5'-phosphate as a cofactor.

It carries out the reaction S-adenosyl-L-methionine = 1-aminocyclopropane-1-carboxylate + S-methyl-5'-thioadenosine + H(+). Its pathway is alkene biosynthesis; ethylene biosynthesis via S-adenosyl-L-methionine; ethylene from S-adenosyl-L-methionine: step 1/2. Functionally, catalyzes the formation of 1-aminocyclopropane-1-carboxylate, a direct precursor of ethylene in higher plants. The protein is 1-aminocyclopropane-1-carboxylate synthase CMA101 (ACS2) of Cucurbita maxima (Pumpkin).